The sequence spans 223 residues: MGQKVHPHGLRVGIIKEWDAKWYADKKNFADNLVEDNKIRKFVKKKGAIAGISKIQIERAAKRIKLNIFTAKPGMIIGKGGQGIEALKTELKKIVPDKVILINIVEVKVAEADAQLMAENIALQLEKRISFRRAMKQTIQRAMKSGIKGVKTTCSGRLGGAEIARSESYHEGTIPLQTLRADIDYGFAEADTTYGKIGVKVWVYKGEVLPVKKPVENKEEAKA.

The region spanning 39–108 is the KH type-2 domain; it reads IRKFVKKKGA…VILINIVEVK (70 aa).

This sequence belongs to the universal ribosomal protein uS3 family. In terms of assembly, part of the 30S ribosomal subunit. Forms a tight complex with proteins S10 and S14.

Its function is as follows. Binds the lower part of the 30S subunit head. Binds mRNA in the 70S ribosome, positioning it for translation. This chain is Small ribosomal subunit protein uS3, found in Clostridium kluyveri (strain NBRC 12016).